We begin with the raw amino-acid sequence, 257 residues long: Glucanase inhibitor protein 1 (257 aa).

The signal sequence occupies residues 1–28 (MKVFPALTSALVALGTAGVEAEHVQRSL). The Peptidase S1 domain occupies 29–256 (VMGGGTVPVG…GLEWINSVIK (228 aa)). A disulfide bridge links Cys-56 with Cys-72. Asn-107 and Asn-180 each carry an N-linked (GlcNAc...) asparagine glycan. Disulfide bonds link Cys-181–Cys-191 and Cys-201–Cys-232. Asn-213 carries N-linked (GlcNAc...) asparagine glycosylation.

The protein belongs to the peptidase S1 family. In terms of assembly, interacts with host endoglucanases EGaseA.

The protein resides in the secreted. Its function is as follows. Secreted effector that suppresses host plant glucan elicitor-mediated defense responses. Targets host endoglucanase EGaseA and inhibits the EGaseA-mediated release of elicitor-active glucan oligosaccharides from P.sojae cell walls. In Phytophthora sojae (Soybean stem and root rot agent), this protein is Glucanase inhibitor protein 1.